A 156-amino-acid chain; its full sequence is MSRRHKAERREVIPDAKFGNIIVSRFMNSIMRDGKKSVAESIVYGALDVVEAKAKSNPLDLFVTALENVAPAVEVRSRRVGGATYQVPVEVRTERRQTLAIRWLIASARARNEKTMVERLSAELLDAANNRGNAVKKREDTHRMAEANRAFSHYRW.

Belongs to the universal ribosomal protein uS7 family. Part of the 30S ribosomal subunit. Contacts proteins S9 and S11.

Its function is as follows. One of the primary rRNA binding proteins, it binds directly to 16S rRNA where it nucleates assembly of the head domain of the 30S subunit. Is located at the subunit interface close to the decoding center, probably blocks exit of the E-site tRNA. The chain is Small ribosomal subunit protein uS7 from Azorhizobium caulinodans (strain ATCC 43989 / DSM 5975 / JCM 20966 / LMG 6465 / NBRC 14845 / NCIMB 13405 / ORS 571).